The chain runs to 252 residues: Hydroxyacylglutathione hydrolase (252 aa).

Zn(2+) contacts are provided by histidine 54, histidine 56, aspartate 58, histidine 59, histidine 111, aspartate 128, and histidine 166.

It belongs to the metallo-beta-lactamase superfamily. Glyoxalase II family. In terms of assembly, monomer. Zn(2+) is required as a cofactor.

The catalysed reaction is an S-(2-hydroxyacyl)glutathione + H2O = a 2-hydroxy carboxylate + glutathione + H(+). The protein operates within secondary metabolite metabolism; methylglyoxal degradation; (R)-lactate from methylglyoxal: step 2/2. Thiolesterase that catalyzes the hydrolysis of S-D-lactoyl-glutathione to form glutathione and D-lactic acid. The sequence is that of Hydroxyacylglutathione hydrolase from Vibrio vulnificus (strain CMCP6).